The following is a 200-amino-acid chain: Imidazole glycerol phosphate synthase subunit HisH (200 aa).

A Glutamine amidotransferase type-1 domain is found at 3–200 (DVALIDAGGA…LRNFLEMSFP (198 aa)). Residue C78 is the Nucleophile of the active site. Active-site residues include H179 and E181.

Heterodimer of HisH and HisF.

It is found in the cytoplasm. The catalysed reaction is 5-[(5-phospho-1-deoxy-D-ribulos-1-ylimino)methylamino]-1-(5-phospho-beta-D-ribosyl)imidazole-4-carboxamide + L-glutamine = D-erythro-1-(imidazol-4-yl)glycerol 3-phosphate + 5-amino-1-(5-phospho-beta-D-ribosyl)imidazole-4-carboxamide + L-glutamate + H(+). The enzyme catalyses L-glutamine + H2O = L-glutamate + NH4(+). The protein operates within amino-acid biosynthesis; L-histidine biosynthesis; L-histidine from 5-phospho-alpha-D-ribose 1-diphosphate: step 5/9. Functionally, IGPS catalyzes the conversion of PRFAR and glutamine to IGP, AICAR and glutamate. The HisH subunit catalyzes the hydrolysis of glutamine to glutamate and ammonia as part of the synthesis of IGP and AICAR. The resulting ammonia molecule is channeled to the active site of HisF. In Xanthomonas euvesicatoria pv. vesicatoria (strain 85-10) (Xanthomonas campestris pv. vesicatoria), this protein is Imidazole glycerol phosphate synthase subunit HisH.